Here is a 155-residue protein sequence, read N- to C-terminus: 6,7-dimethyl-8-ribityllumazine synthase (155 aa).

5-amino-6-(D-ribitylamino)uracil is bound by residues Trp-24, 58–60 (AFE), and 82–84 (AVI). Position 87-88 (87-88 (GT)) interacts with (2S)-2-hydroxy-3-oxobutyl phosphate. His-90 (proton donor) is an active-site residue. Phe-115 is a 5-amino-6-(D-ribitylamino)uracil binding site. Arg-129 contacts (2S)-2-hydroxy-3-oxobutyl phosphate.

Belongs to the DMRL synthase family. As to quaternary structure, forms an icosahedral capsid composed of 60 subunits, arranged as a dodecamer of pentamers.

It carries out the reaction (2S)-2-hydroxy-3-oxobutyl phosphate + 5-amino-6-(D-ribitylamino)uracil = 6,7-dimethyl-8-(1-D-ribityl)lumazine + phosphate + 2 H2O + H(+). Its pathway is cofactor biosynthesis; riboflavin biosynthesis; riboflavin from 2-hydroxy-3-oxobutyl phosphate and 5-amino-6-(D-ribitylamino)uracil: step 1/2. Its function is as follows. Catalyzes the formation of 6,7-dimethyl-8-ribityllumazine by condensation of 5-amino-6-(D-ribitylamino)uracil with 3,4-dihydroxy-2-butanone 4-phosphate. This is the penultimate step in the biosynthesis of riboflavin. This is 6,7-dimethyl-8-ribityllumazine synthase from Teredinibacter turnerae (strain ATCC 39867 / T7901).